Reading from the N-terminus, the 216-residue chain is Uracil phosphoribosyltransferase (216 aa).

Residue 30-34 (KNLVR) coordinates GTP. 5-phospho-alpha-D-ribose 1-diphosphate contacts are provided by residues Arg-80, Arg-105, and 140–148 (DPMIATAST). Uracil-binding positions include Ile-203 and 208–210 (GDA). Position 209 (Asp-209) interacts with 5-phospho-alpha-D-ribose 1-diphosphate.

The protein belongs to the UPRTase family. The cofactor is Mg(2+).

The enzyme catalyses UMP + diphosphate = 5-phospho-alpha-D-ribose 1-diphosphate + uracil. It participates in pyrimidine metabolism; UMP biosynthesis via salvage pathway; UMP from uracil: step 1/1. Its activity is regulated as follows. Allosterically activated by GTP. Its function is as follows. Catalyzes the conversion of uracil and 5-phospho-alpha-D-ribose 1-diphosphate (PRPP) to UMP and diphosphate. The protein is Uracil phosphoribosyltransferase of Saccharolobus islandicus (strain Y.N.15.51 / Yellowstone #2) (Sulfolobus islandicus).